The chain runs to 395 residues: MASLRLPAQLVTRGNLIHHNSSSSSSGRLSWRRSLTPENTIPLFPSSSSSSLNRERSIVVPVTCSAAAVNLAPGTPVRPTSILVVGATGTLGRQIVRRALDEGYDVRCLVRPRPAPADFLRDWGATVVNADLSKPETIPATLVGIHTVIDCATGRPEEPIKTVDWEGKVALIQCAKAMGIQKYVFYSIHNCDKHPEVPLMEIKYCTEKFLQESGLNHITIRLCGFMQGLIGQYAVPILEEKSVWGTDAPTRVAYMDTQDIARLTLIALRNEKINGKLLTFAGPRAWTTQEVITLCERLAGQDANVTTVPVSVLRVTRQLTRFFQWTNDVADRLAFSEVLSSDTVFSAPMTETNSLLGVDQKDMVTLEKYLQDYFSNILKKLKDLKAQSKQSDIYF.

The N-terminal 64 residues, 1 to 64 (MASLRLPAQL…ERSIVVPVTC (64 aa)), are a transit peptide targeting the chloroplast.

Belongs to the NmrA-type oxidoreductase family. In terms of assembly, component of a high molecular weight complex containing OHP1, OHP2 and HCF244, and PSII core proteins D1/D2, HCF136 and HCF173. Interacts with OHP1. Forms a trimeric complex with OHP1 and OHP2 that mutually stabilizes each subunit.

It localises to the plastid. The protein resides in the chloroplast stroma. Its subcellular location is the chloroplast thylakoid membrane. Functionally, auxiliary factor required, together with HCF173, for the biogenesis of photosystem II (PSII), especially for the synthesis of the reaction center proteins (e.g. D1), via the regulation of the corresponding mRNA (e.g. psbA) translation initiation (ribosomal loading) and stabilization. Forms a trimeric complex with OHP1 and OHP2 that is required to promote PSII core subunit assembly. The trimeric complex forms a transient PSII reaction center-like complex with PsbA, PsbD, PsbE, PsbF and PsbI subunits in thylakoids for early assembly of PSII as well as PSII repair. The trimeric complex is required for the recruitment of ribosomes to the psbA mRNA during PSII biogenesis and repair. The polypeptide is Protein HIGH CHLOROPHYLL FLUORESCENCE PHENOTYPE 244, chloroplastic (Arabidopsis thaliana (Mouse-ear cress)).